An 83-amino-acid chain; its full sequence is Small ribosomal subunit protein bS20 (83 aa).

This sequence belongs to the bacterial ribosomal protein bS20 family.

Binds directly to 16S ribosomal RNA. The polypeptide is Small ribosomal subunit protein bS20 (Lactobacillus delbrueckii subsp. bulgaricus (strain ATCC 11842 / DSM 20081 / BCRC 10696 / JCM 1002 / NBRC 13953 / NCIMB 11778 / NCTC 12712 / WDCM 00102 / Lb 14)).